A 246-amino-acid chain; its full sequence is Small ribosomal subunit protein uS2 (246 aa).

Belongs to the universal ribosomal protein uS2 family.

This Exiguobacterium sp. (strain ATCC BAA-1283 / AT1b) protein is Small ribosomal subunit protein uS2.